The chain runs to 122 residues: Serum amyloid A-3 protein (122 aa).

Positions 1–18 (MKLSIGIIFCFLILGVNS) are cleaved as a signal peptide. Residues 88–122 (GRGAEDSKADQEANQWGRSGNDPNHFRPKGLPDKY) form a disordered region. Over residues 99–109 (EANQWGRSGND) the composition is skewed to polar residues.

It belongs to the SAA family. Expressed by the liver; secreted in plasma. Expressed in synovial fibroblasts.

It is found in the secreted. Major acute phase reactant. Apolipoprotein of the HDL complex. In vitro exhibits antimicrobial activity against Escherichia coli, Streptococcus uberis and Pseudomonas aeruginosa. This chain is Serum amyloid A-3 protein (SAA3), found in Oryctolagus cuniculus (Rabbit).